Reading from the N-terminus, the 802-residue chain is Neuronal PAS domain-containing protein 4 (802 aa).

Positions 1-13 (MYRSTKGASKARR) are basic motif; degenerate. One can recognise a bHLH domain in the interval 1-53 (MYRSTKGASKARRDQINAEIRNLKELLPLAEADKVRLSYLHIMSLACIYTRKG). Residues 5–38 (TKGASKARRDQINAEIRNLKELLPLAEADKVRLS) adopt a coiled-coil conformation. The segment at 14–53 (DQINAEIRNLKELLPLAEADKVRLSYLHIMSLACIYTRKG) is helix-loop-helix motif. PAS domains follow at residues 70-144 (SAQE…LDAD) and 203-275 (PGPG…LAEN). The region spanning 280–319 (AEMVVRLQAKHGGWTWIYCMLYSDGPEGPITANNYPISDT) is the PAC domain. 3 stretches are compositionally biased toward polar residues: residues 472–495 (PSSA…SSAR), 502–518 (TPCT…STAT), and 527–555 (THEQ…QLSP). The disordered stretch occupies residues 472–555 (PSSATFPDPL…SQTFPEQLSP (84 aa)). Residues 624 to 648 (YTEKEQNEIDRLIQQISQLAQGMDR) adopt a coiled-coil conformation.

Efficient DNA binding requires dimerization with another bHLH protein. Heterodimer; forms a heterodimer with ARNT, ARNT2 or BMAL1. Post-translationally, ubiquitinated, leading to degradation by the proteosome. Specifically expressed in neurons. Expressed in the lateral nucleus of the amygdala (at protein level).

The protein localises to the nucleus. In terms of biological role, transcription factor expressed in neurons of the brain that regulates the excitatory-inhibitory balance within neural circuits and is required for contextual memory in the hippocampus. Plays a key role in the structural and functional plasticity of neurons. Acts as an early-response transcription factor in both excitatory and inhibitory neurons, where it induces distinct but overlapping sets of late-response genes in these two types of neurons, allowing the synapses that form on inhibitory and excitatory neurons to be modified by neuronal activity in a manner specific to their function within a circuit, thereby facilitating appropriate circuit responses to sensory experience. In excitatory neurons, activates transcription of BDNF, which in turn controls the number of GABA-releasing synapses that form on excitatory neurons, thereby promoting an increased number of inhibitory synapses on excitatory neurons. In inhibitory neurons, regulates a distinct set of target genes that serve to increase excitatory input onto somatostatin neurons, probably resulting in enhanced feedback inhibition within cortical circuits. The excitatory and inhibitory balance in neurons affects a number of processes, such as short-term and long-term memory, acquisition of experience, fear memory, response to stress and social behavior. Acts as a regulator of dendritic spine development in olfactory bulb granule cells in a sensory-experience-dependent manner by regulating expression of MDM2. Efficient DNA binding requires dimerization with another bHLH protein, such as ARNT, ARNT2 or BMAL1. Can activate the CME (CNS midline enhancer) element. The chain is Neuronal PAS domain-containing protein 4 from Rattus norvegicus (Rat).